Here is a 182-residue protein sequence, read N- to C-terminus: Adenylate kinase (182 aa).

12-17 (GAGKGT) is an ATP binding site. The NMP stretch occupies residues 32–61 (STGELLRKEIEMNTALGIQVKDIMNRGELV). Residues Thr33, Arg38, 59–61 (ELV), 85–88 (GYPR), and Gln92 contribute to the AMP site. Residues 126–132 (LRGRKDD) form an LID region. Arg127 serves as a coordination point for ATP. Residues Arg129 and Arg140 each coordinate AMP. ATP is bound at residue Arg168.

This sequence belongs to the adenylate kinase family. In terms of assembly, monomer.

Its subcellular location is the cytoplasm. It catalyses the reaction AMP + ATP = 2 ADP. Its pathway is purine metabolism; AMP biosynthesis via salvage pathway; AMP from ADP: step 1/1. Catalyzes the reversible transfer of the terminal phosphate group between ATP and AMP. Plays an important role in cellular energy homeostasis and in adenine nucleotide metabolism. This chain is Adenylate kinase, found in Prochlorococcus marinus (strain MIT 9301).